We begin with the raw amino-acid sequence, 211 residues long: Claudin-13 (211 aa).

Topologically, residues 1–8 (MVVSKQEA) are cytoplasmic. Residues 9-29 (ISFSVTSLGWVGAIVSCVLPV) traverse the membrane as a helical segment. Residues 30-80 (WRVTFPDDETDPDATIWEGLWHICQVRENRWIQCTLYDTRILVAQDIKVSR) are Extracellular-facing. The chain crosses the membrane as a helical span at residues 81–101 (VFMVICTIGTWLGLLLCVLGD). Over 102-118 (WRINCFMNFTIEENLLK) the chain is Cytoplasmic. The helical transmembrane segment at 119–139 (VAGGMFLSVGLLMLVPLSWVT) threads the bilayer. Residues 140–165 (HNIIHGFFNPLLGFSKKVQMGSSLSL) are Extracellular-facing. A helical transmembrane segment spans residues 166–186 (AWTSSLLLLLGGILLCVNIPV). The Cytoplasmic segment spans residues 187 to 211 (CRDFPRCIETPSARPSGANNDTLDV).

This sequence belongs to the claudin family.

The protein resides in the cell junction. Its subcellular location is the tight junction. It localises to the cell membrane. In terms of biological role, plays a major role in tight junction-specific obliteration of the intercellular space, through calcium-independent cell-adhesion activity. The protein is Claudin-13 (Cldn13) of Mus musculus (Mouse).